Reading from the N-terminus, the 339-residue chain is 2-deoxy-scyllo-inosamine dehydrogenase (339 aa).

Residues C37, H59, C88, C91, C94, C102, and E143 each coordinate Zn(2+).

Belongs to the zinc-containing alcohol dehydrogenase family. DOIA dehydrogenase subfamily. The cofactor is Zn(2+).

It carries out the reaction 2-deoxy-scyllo-inosamine + NADP(+) = 3-amino-2,3-dideoxy-scyllo-inosose + NADPH + H(+). The catalysed reaction is 2-deoxy-scyllo-inosamine + NAD(+) = 3-amino-2,3-dideoxy-scyllo-inosose + NADH + H(+). It participates in metabolic intermediate biosynthesis; 2-deoxystreptamine biosynthesis; 2-deoxystreptamine from D-glucose 6-phosphate: step 3/4. The protein operates within antibiotic biosynthesis; paromomycin biosynthesis. Its function is as follows. Catalyzes the oxidation of 2-deoxy-scyllo-inosamine (DOIA) with NAD(+) or NADP(+), forming 3-amino-2,3-dideoxy-scyllo-inosose (amino-DOI). The sequence is that of 2-deoxy-scyllo-inosamine dehydrogenase (parE) from Streptomyces paromomycinus (Streptomyces rimosus subsp. paromomycinus).